A 95-amino-acid polypeptide reads, in one-letter code: DNA-directed RNA polymerase subunit Rpo11 (95 aa).

This sequence belongs to the archaeal Rpo11/eukaryotic RPB11/RPC19 RNA polymerase subunit family. Part of the RNA polymerase complex.

The protein resides in the cytoplasm. It carries out the reaction RNA(n) + a ribonucleoside 5'-triphosphate = RNA(n+1) + diphosphate. In terms of biological role, DNA-dependent RNA polymerase (RNAP) catalyzes the transcription of DNA into RNA using the four ribonucleoside triphosphates as substrates. The sequence is that of DNA-directed RNA polymerase subunit Rpo11 from Pyrococcus abyssi (strain GE5 / Orsay).